Here is a 206-residue protein sequence, read N- to C-terminus: Protein GrpE (206 aa).

The disordered stretch occupies residues 1–64; that stretch reads MSKKASMHKE…KALEEAQQQA (64 aa). Basic and acidic residues predominate over residues 46–58; sequence SDAKVQELEKALE.

This sequence belongs to the GrpE family. As to quaternary structure, homodimer.

It is found in the cytoplasm. Its function is as follows. Participates actively in the response to hyperosmotic and heat shock by preventing the aggregation of stress-denatured proteins, in association with DnaK and GrpE. It is the nucleotide exchange factor for DnaK and may function as a thermosensor. Unfolded proteins bind initially to DnaJ; upon interaction with the DnaJ-bound protein, DnaK hydrolyzes its bound ATP, resulting in the formation of a stable complex. GrpE releases ADP from DnaK; ATP binding to DnaK triggers the release of the substrate protein, thus completing the reaction cycle. Several rounds of ATP-dependent interactions between DnaJ, DnaK and GrpE are required for fully efficient folding. The chain is Protein GrpE from Prosthecochloris aestuarii (strain DSM 271 / SK 413).